The primary structure comprises 156 residues: Small ribosomal subunit protein uS7 (156 aa).

This sequence belongs to the universal ribosomal protein uS7 family. Part of the 30S ribosomal subunit. Contacts proteins S9 and S11.

Functionally, one of the primary rRNA binding proteins, it binds directly to 16S rRNA where it nucleates assembly of the head domain of the 30S subunit. Is located at the subunit interface close to the decoding center, probably blocks exit of the E-site tRNA. The polypeptide is Small ribosomal subunit protein uS7 (Gloeobacter violaceus (strain ATCC 29082 / PCC 7421)).